Consider the following 256-residue polypeptide: Pimeloyl-[acyl-carrier protein] methyl ester esterase (256 aa).

An AB hydrolase-1 domain is found at 15–242 (HLVLLHGWGL…AAHAPFISHP (228 aa)). Residues Trp-22, 82–83 (SL), and 143–147 (FLALQ) contribute to the substrate site. Ser-82 acts as the Nucleophile in catalysis. Residues Asp-207 and His-235 contribute to the active site. A substrate-binding site is contributed by His-235.

It belongs to the AB hydrolase superfamily. Carboxylesterase BioH family. In terms of assembly, monomer.

Its subcellular location is the cytoplasm. The catalysed reaction is 6-carboxyhexanoyl-[ACP] methyl ester + H2O = 6-carboxyhexanoyl-[ACP] + methanol + H(+). Its pathway is cofactor biosynthesis; biotin biosynthesis. In terms of biological role, the physiological role of BioH is to remove the methyl group introduced by BioC when the pimeloyl moiety is complete. It allows to synthesize pimeloyl-ACP via the fatty acid synthetic pathway through the hydrolysis of the ester bonds of pimeloyl-ACP esters. The polypeptide is Pimeloyl-[acyl-carrier protein] methyl ester esterase (Escherichia coli O127:H6 (strain E2348/69 / EPEC)).